Consider the following 402-residue polypeptide: D-mannonate dehydratase (402 aa).

Positions 37 and 122 each coordinate substrate. The Proton donor/acceptor role is filled by Tyr159. A Mg(2+)-binding site is contributed by Asp210. His212 functions as the Proton donor/acceptor in the catalytic mechanism. Positions 236 and 262 each coordinate Mg(2+). Substrate is bound by residues Glu262, Arg283, His312, Asp316, and Glu339.

Belongs to the mandelate racemase/muconate lactonizing enzyme family. GalD subfamily. Homotetramer. Requires Mg(2+) as cofactor.

It catalyses the reaction D-mannonate = 2-dehydro-3-deoxy-D-gluconate + H2O. It participates in carbohydrate metabolism; pentose and glucuronate interconversion. Functionally, catalyzes the dehydration of D-mannonate. Has no detectable activity with a panel of 70 other acid sugars (in vitro). The chain is D-mannonate dehydratase (manD) from Novosphingobium aromaticivorans (strain ATCC 700278 / DSM 12444 / CCUG 56034 / CIP 105152 / NBRC 16084 / F199).